Reading from the N-terminus, the 271-residue chain is 2-aminophenol 1,6-dioxygenase subunit alpha (271 aa).

The protein belongs to the LigB/MhpB extradiol dioxygenase family. As to quaternary structure, the APD complex is a heterotetramer of 2 alpha (CnbCa) and 2 beta (CnbCb) subunits.

It participates in xenobiotic degradation; nitrobenzene degradation. It functions in the pathway xenobiotic degradation; 4-chloronitrobenzene degradation. In terms of biological role, component of the 2-aminophenol 1,6-dioxygenase (APD) complex that catalyzes the ring fission of 2-aminophenol to produce 2-aminomuconic semialdehyde. CnbCa may have a role in the stability of the complex. The complex is also active on other substrates such as 2-amino-5-chlorophenol (68% activity), protocatechuate (33% activity) and catechol (5% activity). Both 2-aminophenol and 2-amino-5-cholorophenol are likely native substrates for this dioxygenase which is involved in the reductive degradation pathway of both nitrobenzene (NB) and 4-chloronitrobenzene (4-CNB), allowing C.testosteroni strain CNB-1 to grow on these compounds as sole source of carbon, nitrogen, and energy. The protein is 2-aminophenol 1,6-dioxygenase subunit alpha of Comamonas testosteroni (Pseudomonas testosteroni).